The sequence spans 263 residues: 4-hydroxy-2-oxo-heptane-1,7-dioate aldolase (263 aa).

Histidine 45 acts as the Proton acceptor in catalysis. Glutamine 147 provides a ligand contact to substrate. Glutamate 149 provides a ligand contact to a divalent metal cation. Residues alanine 174 and aspartate 175 each contribute to the substrate site. Residue aspartate 175 participates in a divalent metal cation binding.

The protein belongs to the HpcH/HpaI aldolase family. Homohexamer; trimer of dimers. Requires a divalent metal cation as cofactor.

The enzyme catalyses 4-hydroxy-2-oxoheptanedioate = succinate semialdehyde + pyruvate. It participates in aromatic compound metabolism; 4-hydroxyphenylacetate degradation; pyruvate and succinate semialdehyde from 4-hydroxyphenylacetate: step 7/7. In terms of biological role, catalyzes the reversible retro-aldol cleavage of 4-hydroxy-2-ketoheptane-1,7-dioate (HKHD) to pyruvate and succinic semialdehyde. In Salmonella paratyphi A (strain ATCC 9150 / SARB42), this protein is 4-hydroxy-2-oxo-heptane-1,7-dioate aldolase.